The following is a 90-amino-acid chain: Small ribosomal subunit protein bS16 (90 aa).

It belongs to the bacterial ribosomal protein bS16 family.

The polypeptide is Small ribosomal subunit protein bS16 (Bacillus anthracis (strain A0248)).